The chain runs to 229 residues: 5'-methylthioadenosine/S-adenosylhomocysteine nucleosidase (229 aa).

E12 serves as the catalytic Proton acceptor. Substrate contacts are provided by residues G78, I152, and 173–174 (ME). Residue D197 is the Proton donor of the active site.

The protein belongs to the PNP/UDP phosphorylase family. MtnN subfamily.

The enzyme catalyses S-adenosyl-L-homocysteine + H2O = S-(5-deoxy-D-ribos-5-yl)-L-homocysteine + adenine. The catalysed reaction is S-methyl-5'-thioadenosine + H2O = 5-(methylsulfanyl)-D-ribose + adenine. It carries out the reaction 5'-deoxyadenosine + H2O = 5-deoxy-D-ribose + adenine. Its pathway is amino-acid biosynthesis; L-methionine biosynthesis via salvage pathway; S-methyl-5-thio-alpha-D-ribose 1-phosphate from S-methyl-5'-thioadenosine (hydrolase route): step 1/2. Catalyzes the irreversible cleavage of the glycosidic bond in both 5'-methylthioadenosine (MTA) and S-adenosylhomocysteine (SAH/AdoHcy) to adenine and the corresponding thioribose, 5'-methylthioribose and S-ribosylhomocysteine, respectively. Also cleaves 5'-deoxyadenosine, a toxic by-product of radical S-adenosylmethionine (SAM) enzymes, into 5-deoxyribose and adenine. This is 5'-methylthioadenosine/S-adenosylhomocysteine nucleosidase from Haemophilus influenzae (strain PittGG).